The following is a 306-amino-acid chain: tRNA pseudouridine synthase B (306 aa).

The active-site Nucleophile is D38.

The protein belongs to the pseudouridine synthase TruB family. Type 1 subfamily.

It catalyses the reaction uridine(55) in tRNA = pseudouridine(55) in tRNA. Its function is as follows. Responsible for synthesis of pseudouridine from uracil-55 in the psi GC loop of transfer RNAs. This is tRNA pseudouridine synthase B from Syntrophotalea carbinolica (strain DSM 2380 / NBRC 103641 / GraBd1) (Pelobacter carbinolicus).